Here is a 164-residue protein sequence, read N- to C-terminus: UPF0304 protein YfbU (164 aa).

The protein belongs to the UPF0304 family.

This chain is UPF0304 protein YfbU, found in Shigella flexneri serotype 5b (strain 8401).